The sequence spans 638 residues: Asparagine--tRNA ligase, cytoplasmic 2 (638 aa).

Residues 1-16 (MESHGKTHQKEHDNDL) show a composition bias toward basic and acidic residues. Disordered regions lie at residues 1–23 (MESHGKTHQKEHDNDLSPKPITL) and 62–87 (VKKNSPPPPLPVVAAPSPSSGGDQAH).

Belongs to the class-II aminoacyl-tRNA synthetase family.

The protein localises to the cytoplasm. Its subcellular location is the cytosol. It carries out the reaction tRNA(Asn) + L-asparagine + ATP = L-asparaginyl-tRNA(Asn) + AMP + diphosphate + H(+). In Arabidopsis thaliana (Mouse-ear cress), this protein is Asparagine--tRNA ligase, cytoplasmic 2.